Consider the following 140-residue polypeptide: MQTTWQPGCSYPTSWLSSQESFSKMRTGWRGAIPLRWRNRARNREKPHSPRAVSSPATHSLPPSNPCRLTPTLSSARPREGSCPSKCSCPGGNWSNTALSAELMWAEGRFSGGCLPVYMRQNINPGCQEQWEGEERSRWL.

A disordered region spans residues 34-88 (PLRWRNRARNREKPHSPRAVSSPATHSLPPSNPCRLTPTLSSARPREGSCPSKCS).

In terms of tissue distribution, expressed in a range of cell lines, including B-cell lymphoma and prostate.

This is an uncharacterized protein from Homo sapiens (Human).